The following is a 261-amino-acid chain: Intermembrane phospholipid transport system permease protein MlaE (261 aa).

The Cytoplasmic segment spans residues 1-12 (MIVNFISALGKQ). The helical transmembrane segment at 13–33 (VIDFFRALGRAGFMLFGALIG) threads the bilayer. Residues 34–49 (KPQIRKHFPLLVKQMH) are Periplasmic-facing. The helical transmembrane segment at 50–70 (VLGVQSLLIILLSGLFIGMVL) threads the bilayer. The Cytoplasmic portion of the chain corresponds to 71–147 (GLQGYVVLID…DPLRRVIAPR (77 aa)). Residues 148 to 168 (FWAGVISMPVLSILFIAIGIW) form a helical membrane-spanning segment. Over 169–198 (GGSLVGVDWKGVDSGSFWSVMQNSVSWSYD) the chain is Periplasmic. A helical membrane pass occupies residues 199-219 (ILNGFIKAVFFAVAVTWIALF). Residues 220-238 (NGYDCMPTSEGISQATTRT) are Cytoplasmic-facing. A helical transmembrane segment spans residues 239–259 (VVHASLVVLGLDFILTAIMFG). The Periplasmic portion of the chain corresponds to 260–261 (AG).

This sequence belongs to the MlaE permease family. The complex is composed of two ATP-binding proteins (MlaF), two transmembrane proteins (MlaE), two cytoplasmic solute-binding proteins (MlaB) and six periplasmic solute-binding proteins (MlaD).

The protein resides in the cell inner membrane. Functionally, part of the ABC transporter complex MlaFEDB, which is involved in a phospholipid transport pathway that maintains lipid asymmetry in the outer membrane by retrograde trafficking of phospholipids from the outer membrane to the inner membrane. Probably responsible for the translocation of the substrate across the membrane. This Haemophilus influenzae (strain ATCC 51907 / DSM 11121 / KW20 / Rd) protein is Intermembrane phospholipid transport system permease protein MlaE.